The following is a 671-amino-acid chain: DNA ligase (671 aa).

NAD(+) contacts are provided by residues 35–39 (DQQYD), 84–85 (SL), and E113. Catalysis depends on K115, which acts as the N6-AMP-lysine intermediate. NAD(+) contacts are provided by R136, E170, K285, and K309. C403, C406, C421, and C426 together coordinate Zn(2+). Positions 588 to 671 (TTQTIFTNKK…QIIENSQIKL (84 aa)) constitute a BRCT domain.

The protein belongs to the NAD-dependent DNA ligase family. LigA subfamily. The cofactor is Mg(2+). It depends on Mn(2+) as a cofactor.

The enzyme catalyses NAD(+) + (deoxyribonucleotide)n-3'-hydroxyl + 5'-phospho-(deoxyribonucleotide)m = (deoxyribonucleotide)n+m + AMP + beta-nicotinamide D-nucleotide.. Its function is as follows. DNA ligase that catalyzes the formation of phosphodiester linkages between 5'-phosphoryl and 3'-hydroxyl groups in double-stranded DNA using NAD as a coenzyme and as the energy source for the reaction. It is essential for DNA replication and repair of damaged DNA. The protein is DNA ligase of Onion yellows phytoplasma (strain OY-M).